The following is a 208-amino-acid chain: Small ribosomal subunit protein uS4 (208 aa).

The S4 RNA-binding domain occupies 98–161 (LRLDNVVFRL…RKVVRISEAL (64 aa)).

This sequence belongs to the universal ribosomal protein uS4 family. As to quaternary structure, part of the 30S ribosomal subunit. Contacts protein S5. The interaction surface between S4 and S5 is involved in control of translational fidelity.

Its function is as follows. One of the primary rRNA binding proteins, it binds directly to 16S rRNA where it nucleates assembly of the body of the 30S subunit. In terms of biological role, with S5 and S12 plays an important role in translational accuracy. This is Small ribosomal subunit protein uS4 from Anaeromyxobacter sp. (strain Fw109-5).